A 383-amino-acid chain; its full sequence is Bifunctional enzyme IspD/IspF (383 aa).

Residues 1-226 (MKIAAVIVAA…ERQIMSETIT (226 aa)) are 2-C-methyl-D-erythritol 4-phosphate cytidylyltransferase. The segment at 227–383 (VTGQGYDVHR…QAIVTARLTT (157 aa)) is 2-C-methyl-D-erythritol 2,4-cyclodiphosphate synthase. A divalent metal cation-binding residues include D233 and H235. 4-CDP-2-C-methyl-D-erythritol 2-phosphate-binding positions include 233–235 (DVH) and 259–260 (HS). H267 provides a ligand contact to a divalent metal cation. Residues 281 to 283 (DIG), 357 to 360 (TTTE), F364, and R367 contribute to the 4-CDP-2-C-methyl-D-erythritol 2-phosphate site.

The protein in the N-terminal section; belongs to the IspD/TarI cytidylyltransferase family. IspD subfamily. It in the C-terminal section; belongs to the IspF family. It depends on a divalent metal cation as a cofactor.

The catalysed reaction is 2-C-methyl-D-erythritol 4-phosphate + CTP + H(+) = 4-CDP-2-C-methyl-D-erythritol + diphosphate. The enzyme catalyses 4-CDP-2-C-methyl-D-erythritol 2-phosphate = 2-C-methyl-D-erythritol 2,4-cyclic diphosphate + CMP. It participates in isoprenoid biosynthesis; isopentenyl diphosphate biosynthesis via DXP pathway; isopentenyl diphosphate from 1-deoxy-D-xylulose 5-phosphate: step 2/6. Its pathway is isoprenoid biosynthesis; isopentenyl diphosphate biosynthesis via DXP pathway; isopentenyl diphosphate from 1-deoxy-D-xylulose 5-phosphate: step 4/6. In terms of biological role, bifunctional enzyme that catalyzes the formation of 4-diphosphocytidyl-2-C-methyl-D-erythritol from CTP and 2-C-methyl-D-erythritol 4-phosphate (MEP) (IspD), and catalyzes the conversion of 4-diphosphocytidyl-2-C-methyl-D-erythritol 2-phosphate (CDP-ME2P) to 2-C-methyl-D-erythritol 2,4-cyclodiphosphate (ME-CPP) with a corresponding release of cytidine 5-monophosphate (CMP) (IspF). The sequence is that of Bifunctional enzyme IspD/IspF from Maricaulis maris (strain MCS10) (Caulobacter maris).